The following is a 78-amino-acid chain: Nucleocapsid VP1 (78 aa).

In terms of assembly, homodimer.

The protein localises to the virion. Functionally, completely wraps the viral circular dsDNA genome to form a nucleoprotein filament. These interactions between the viral genome and the nucleocapsid proteins probably maintain the DNA in A-form. This certainly protects the viral DNA under conditions such as the extreme desiccation of its host. This Sulfolobus (SPV1) protein is Nucleocapsid VP1.